Reading from the N-terminus, the 368-residue chain is Glycoprotein UL18 (368 aa).

Residues 1–18 form the signal peptide; it reads MMTMWCLTLFVLWMLRVV. The interval 19-114 is alpha-1-like; the sequence is GMHVLRYGYT…EIALGYRSQS (96 aa). 13 N-linked (GlcNAc...) asparagine; by host glycosylation sites follow: Asn56, Asn66, Asn74, Asn95, Asn123, Asn127, Asn150, Asn167, Asn177, Asn193, Asn240, Asn282, and Asn291. An alpha-2-like region spans residues 115-208; sequence VLTWTHECNT…VIYSGFQPPV (94 aa). The alpha-3-like stretch occupies residues 209 to 303; sequence THPVVKGGVR…VEIPISVTSP (95 aa). Residues 321 to 342 form a helical membrane-spanning segment; that stretch reads YNTMTISSVLLALLLCALLFAF.

Interacts with host LILRB1.

The protein localises to the host membrane. Plays a role in the protection against host NK cell cytotoxicity by interacting with and modulating the activity of the host inhibitory leukocyte Ig-like receptor 1/LILRB1, which is expressed on monocytes, dendritic cells, as well as subsets of T and NK cells. UL18 exerts an inhibitory effect on LIR-1+ NK cells, while it stimulates LIR-1- NK cell. These modulations prevent lysis of the infected cells by NK cells. This is Glycoprotein UL18 (H301) from Homo sapiens (Human).